Consider the following 66-residue polypeptide: MYVHSSNLTDTISYPDVVINYRSWTKCTHFFGLLFDSRIIMLNFSIYSVSCFKYVMMNPYSFQTQV.

This is an uncharacterized protein from Vaccinia virus (strain Copenhagen) (VACV).